We begin with the raw amino-acid sequence, 120 residues long: Chaperonin GroEL (120 aa).

23–27 (DGTTT) contributes to the ATP binding site.

It belongs to the chaperonin (HSP60) family. Forms a cylinder of 14 subunits composed of two heptameric rings stacked back-to-back. Interacts with the co-chaperonin GroES.

It localises to the cytoplasm. The enzyme catalyses ATP + H2O + a folded polypeptide = ADP + phosphate + an unfolded polypeptide.. In terms of biological role, together with its co-chaperonin GroES, plays an essential role in assisting protein folding. The GroEL-GroES system forms a nano-cage that allows encapsulation of the non-native substrate proteins and provides a physical environment optimized to promote and accelerate protein folding. The protein is Chaperonin GroEL of Mycobacterium shimoidei.